The following is a 738-amino-acid chain: Phosphoribosylformylglycinamidine synthase subunit PurL (738 aa).

His-41 is a catalytic residue. ATP-binding residues include Tyr-44 and Lys-83. Glu-85 contacts Mg(2+). Substrate contacts are provided by residues 86–89 and Arg-108; that span reads SHNH. Residue His-87 is the Proton acceptor of the active site. A Mg(2+)-binding site is contributed by Asp-109. Gln-233 provides a ligand contact to substrate. Asp-261 is a Mg(2+) binding site. 305–307 lines the substrate pocket; that stretch reads ESQ. Residues Asp-490 and Gly-527 each contribute to the ATP site. Residue Asn-528 participates in Mg(2+) binding. Ser-530 serves as a coordination point for substrate.

Belongs to the FGAMS family. Monomer. Part of the FGAM synthase complex composed of 1 PurL, 1 PurQ and 2 PurS subunits.

It is found in the cytoplasm. The enzyme catalyses N(2)-formyl-N(1)-(5-phospho-beta-D-ribosyl)glycinamide + L-glutamine + ATP + H2O = 2-formamido-N(1)-(5-O-phospho-beta-D-ribosyl)acetamidine + L-glutamate + ADP + phosphate + H(+). Its pathway is purine metabolism; IMP biosynthesis via de novo pathway; 5-amino-1-(5-phospho-D-ribosyl)imidazole from N(2)-formyl-N(1)-(5-phospho-D-ribosyl)glycinamide: step 1/2. In terms of biological role, part of the phosphoribosylformylglycinamidine synthase complex involved in the purines biosynthetic pathway. Catalyzes the ATP-dependent conversion of formylglycinamide ribonucleotide (FGAR) and glutamine to yield formylglycinamidine ribonucleotide (FGAM) and glutamate. The FGAM synthase complex is composed of three subunits. PurQ produces an ammonia molecule by converting glutamine to glutamate. PurL transfers the ammonia molecule to FGAR to form FGAM in an ATP-dependent manner. PurS interacts with PurQ and PurL and is thought to assist in the transfer of the ammonia molecule from PurQ to PurL. This chain is Phosphoribosylformylglycinamidine synthase subunit PurL, found in Alkaliphilus metalliredigens (strain QYMF).